The primary structure comprises 80 residues: Exodeoxyribonuclease 7 small subunit (80 aa).

Belongs to the XseB family. Heterooligomer composed of large and small subunits.

The protein resides in the cytoplasm. It carries out the reaction Exonucleolytic cleavage in either 5'- to 3'- or 3'- to 5'-direction to yield nucleoside 5'-phosphates.. Functionally, bidirectionally degrades single-stranded DNA into large acid-insoluble oligonucleotides, which are then degraded further into small acid-soluble oligonucleotides. In Edwardsiella ictaluri (strain 93-146), this protein is Exodeoxyribonuclease 7 small subunit.